The following is a 290-amino-acid chain: ATP synthase gamma chain (290 aa).

The protein belongs to the ATPase gamma chain family. In terms of assembly, F-type ATPases have 2 components, CF(1) - the catalytic core - and CF(0) - the membrane proton channel. CF(1) has five subunits: alpha(3), beta(3), gamma(1), delta(1), epsilon(1). CF(0) has three main subunits: a, b and c.

It localises to the cell inner membrane. Produces ATP from ADP in the presence of a proton gradient across the membrane. The gamma chain is believed to be important in regulating ATPase activity and the flow of protons through the CF(0) complex. This chain is ATP synthase gamma chain, found in Anaeromyxobacter sp. (strain Fw109-5).